A 501-amino-acid chain; its full sequence is L-arabinose isomerase (501 aa).

Residues glutamate 306, glutamate 333, histidine 350, and histidine 450 each contribute to the Mn(2+) site.

Belongs to the arabinose isomerase family. Homohexamer. Mn(2+) serves as cofactor.

It catalyses the reaction beta-L-arabinopyranose = L-ribulose. It functions in the pathway carbohydrate degradation; L-arabinose degradation via L-ribulose; D-xylulose 5-phosphate from L-arabinose (bacterial route): step 1/3. Functionally, catalyzes the conversion of L-arabinose to L-ribulose. The sequence is that of L-arabinose isomerase from Pectobacterium carotovorum subsp. carotovorum (strain PC1).